Here is a 369-residue protein sequence, read N- to C-terminus: Anhydro-N-acetylmuramic acid kinase (369 aa).

Residue 12–19 coordinates ATP; the sequence is GTSLDGVD.

This sequence belongs to the anhydro-N-acetylmuramic acid kinase family.

It catalyses the reaction 1,6-anhydro-N-acetyl-beta-muramate + ATP + H2O = N-acetyl-D-muramate 6-phosphate + ADP + H(+). The protein operates within amino-sugar metabolism; 1,6-anhydro-N-acetylmuramate degradation. It participates in cell wall biogenesis; peptidoglycan recycling. Functionally, catalyzes the specific phosphorylation of 1,6-anhydro-N-acetylmuramic acid (anhMurNAc) with the simultaneous cleavage of the 1,6-anhydro ring, generating MurNAc-6-P. Is required for the utilization of anhMurNAc either imported from the medium or derived from its own cell wall murein, and thus plays a role in cell wall recycling. This chain is Anhydro-N-acetylmuramic acid kinase, found in Escherichia coli O157:H7.